The chain runs to 190 residues: Probable RNA-binding protein 18 (190 aa).

An RRM domain is found at 25-106 (HRLWIGNVDP…KKLVVRWAHA (82 aa)).

The protein is Probable RNA-binding protein 18 (rbm18) of Xenopus laevis (African clawed frog).